Consider the following 105-residue polypeptide: Thioredoxin (105 aa).

The Thioredoxin domain maps to 1 to 105; that stretch reads ATMTLTDANF…LEAQLADVLQ (105 aa). Cysteines 29 and 32 form a disulfide.

Functionally, participates in various redox reactions through the reversible oxidation of its active center dithiol to a disulfide and catalyzes dithiol-disulfide exchange reactions. The polypeptide is Thioredoxin (trxA) (Alicyclobacillus acidocaldarius subsp. acidocaldarius (Bacillus acidocaldarius)).